The following is a 491-amino-acid chain: Anhydromuropeptide permease (491 aa).

Residues 1-11 (MSSQYLRIFQQ) lie on the Cytoplasmic side of the membrane. A helical transmembrane segment spans residues 12-32 (PRSAILLILGFASGLPLALTS). Residues 33 to 47 (GTLQAWMTVENIDLK) lie on the Periplasmic side of the membrane. The helical transmembrane segment at 48 to 61 (TIGFFSLVGQAYVF) threads the bilayer. Residues 62–81 (KFLWSPLMDRYTPPFFGRRR) lie on the Cytoplasmic side of the membrane. Residues 82–105 (GWLLATQILLLVAIAAMGFLEPGT) traverse the membrane as a helical segment. Gln-106 is a topological domain (periplasmic). The chain crosses the membrane as a helical span at residues 107 to 124 (LRWMAALAVVIAFCSASQ). Over 125-221 (DIVFDAWKTD…VAPLRDFFGR (97 aa)) the chain is Cytoplasmic. A helical membrane pass occupies residues 222-240 (NNAWLILLLIVLYKLGDAF). Topologically, residues 241–264 (AMSLTTTFLIRGVGFDAGEVGVVN) are periplasmic. The chain crosses the membrane as a helical span at residues 265–284 (KTLGLLATIVGALYGGILMQ). Residues 285 to 287 (RLS) lie on the Cytoplasmic side of the membrane. The helical transmembrane segment at 288 to 303 (LFRALLIFGILQGASN) threads the bilayer. The Periplasmic segment spans residues 304-327 (AGYWLLSITDKHLYSMGAAVFFEN). The helical transmembrane segment at 328 to 346 (LCGGMGTSAFVALLMTLCN) threads the bilayer. Residues 347–421 (KSFSATQFAL…NDNFISRTAY (75 aa)) lie on the Cytoplasmic side of the membrane. A helical membrane pass occupies residues 422-453 (PAGYAFAMWTLAAGVSLLAVWLLLLTMDALDL). Topologically, residues 454–457 (THFS) are periplasmic. The helical transmembrane segment at 458–485 (FLPALLEVGVLVALSGVVLGGLLDYLAL) threads the bilayer. Topologically, residues 486–491 (RKTHLT) are cytoplasmic.

It belongs to the major facilitator superfamily.

It localises to the cell inner membrane. Functionally, permease involved in cell wall peptidoglycan recycling. Transports, from the periplasm into the cytoplasm, the disaccharide N-acetylglucosaminyl-beta-1,4-anhydro-N-acetylmuramic acid (GlcNAc-anhMurNAc) and GlcNAc-anhMurNAc-peptides. Transport is dependent on the proton motive force. In Escherichia coli O157:H7, this protein is Anhydromuropeptide permease (ampG).